The sequence spans 125 residues: Glycine cleavage system H protein (125 aa).

The Lipoyl-binding domain occupies 19 to 101 (VGTVGISDYA…EGAAWFFKLT (83 aa)). K60 bears the N6-lipoyllysine mark.

It belongs to the GcvH family. The glycine cleavage system is composed of four proteins: P, T, L and H. Requires (R)-lipoate as cofactor.

In terms of biological role, the glycine cleavage system catalyzes the degradation of glycine. The H protein shuttles the methylamine group of glycine from the P protein to the T protein. This is Glycine cleavage system H protein from Paramagnetospirillum magneticum (strain ATCC 700264 / AMB-1) (Magnetospirillum magneticum).